The chain runs to 310 residues: Methionyl-tRNA formyltransferase (310 aa).

Residue 110–113 (SLLP) participates in (6S)-5,6,7,8-tetrahydrofolate binding.

This sequence belongs to the Fmt family.

It catalyses the reaction L-methionyl-tRNA(fMet) + (6R)-10-formyltetrahydrofolate = N-formyl-L-methionyl-tRNA(fMet) + (6S)-5,6,7,8-tetrahydrofolate + H(+). Functionally, attaches a formyl group to the free amino group of methionyl-tRNA(fMet). The formyl group appears to play a dual role in the initiator identity of N-formylmethionyl-tRNA by promoting its recognition by IF2 and preventing the misappropriation of this tRNA by the elongation apparatus. This Halorhodospira halophila (strain DSM 244 / SL1) (Ectothiorhodospira halophila (strain DSM 244 / SL1)) protein is Methionyl-tRNA formyltransferase.